A 797-amino-acid chain; its full sequence is Short transient receptor potential channel 4-associated protein (797 aa).

Position 2 is an N-acetylalanine (Ala-2). The tract at residues 2–400 is interaction with TNFRSF1A; that stretch reads AAAPVAAGSG…VLYVLCVLLM (399 aa).

As to quaternary structure, component of the DCX(TRPC4AP) E3 ubiquitin ligase complex, at least composed of CUL4A, DDB1, TRPC4AP/TRUSS and RBX1. Interacts with MYC. Constitutively associated with TNFRSF1A. Directly interacts with TRADD, TRAF2, CHUK, IKBKB and IKBKG. Interacts with TRPC1, TRPC4 and TRPC5. (Microbial infection) Interacts with Hepatitis B virus (HBV) protein X; leading to prevent ubiquitination of TRPC4AP by SKP2. Post-translationally, phosphorylated by GSK3B; phosphorylation is required for ubiquitination. Ubiquitinated by a SCF (SKP1-CUL1-F-box protein) E3 ubiquitin-protein ligase containing SKP2, leading to its degradation. Phosphorylation by GSK3B is required for ubiquitination.

Its subcellular location is the cytoplasm. It is found in the perinuclear region. It functions in the pathway protein modification; protein ubiquitination. Substrate-recognition component of a DCX (DDB1-CUL4-X-box) E3 ubiquitin-protein ligase complex required for cell cycle control. The DCX(TRPC4AP) complex specifically mediates the polyubiquitination and subsequent degradation of MYC as part of the DesCEND (destruction via C-end degrons) pathway. The DesCEND (destruction via C-end degrons) pathway recognizes a C-degron located at the extreme C terminus of target proteins, leading to their ubiquitination and degradation. The DCX(TRPC4AP) complex specifically recognizes proteins with an arginine at the minus 3 position (R-3 motif) at the C-terminus, such as MYC, leading to their ubiquitination and degradation. Also participates in the activation of NFKB1 in response to ligation of TNFRSF1A, possibly by linking TNFRSF1A to the IKK signalosome. Involved in JNK activation via its interaction with TRAF2. Also involved in elevation of endoplasmic reticulum Ca(2+) storage reduction in response to CHRM1. The sequence is that of Short transient receptor potential channel 4-associated protein from Homo sapiens (Human).